A 140-amino-acid polypeptide reads, in one-letter code: Large ribosomal subunit protein uL11 (140 aa).

This sequence belongs to the universal ribosomal protein uL11 family. Part of the ribosomal stalk of the 50S ribosomal subunit. Interacts with L10 and the large rRNA to form the base of the stalk. L10 forms an elongated spine to which L12 dimers bind in a sequential fashion forming a multimeric L10(L12)X complex. In terms of processing, one or more lysine residues are methylated.

Forms part of the ribosomal stalk which helps the ribosome interact with GTP-bound translation factors. The protein is Large ribosomal subunit protein uL11 of Staphylococcus aureus (strain Mu3 / ATCC 700698).